The chain runs to 279 residues: uncharacterized protein (279 aa).

This is an uncharacterized protein from Caenorhabditis elegans.